The following is a 242-amino-acid chain: Response regulator GtcR (242 aa).

The Response regulatory domain occupies 4-117 (TILIADDEPE…EAVARIQAQL (114 aa)). Asp-53 carries the post-translational modification 4-aspartylphosphate. The ompR/PhoB-type DNA-binding region spans 133–233 (TQSTTVGRLT…VRGLGYKFAS (101 aa)).

Phosphorylated by GtcS.

Functionally, member of the two-component regulatory system GtcS/GtcR which may act in the control of the transcription of the grs operon which encodes the multienzymes involved in the biosynthesis of the peptide antibiotic gramicidin S. This Aneurinibacillus migulanus (Bacillus migulanus) protein is Response regulator GtcR (gtcR).